Reading from the N-terminus, the 94-residue chain is C-C motif chemokine 26 (94 aa).

A signal peptide spans 1 to 23; the sequence is MKSFPVAFLVLLIFILSVHRGVT. Intrachain disulfides connect Cys-33–Cys-57 and Cys-34–Cys-73.

The protein belongs to the intercrine beta (chemokine CC) family. Monomer.

It localises to the secreted. In terms of biological role, chemoattractant for eosinophils and basophils. Acts as a ligand for C-C chemokine receptor CCR3 which triggers Ca(2+) mobilization in eosinophils. Also acts as a ligand for CX3C chemokine receptor CX3CR1, inducing cell chemotaxis. The protein is C-C motif chemokine 26 of Canis lupus familiaris (Dog).